The following is a 433-amino-acid chain: UDP-N-acetylglucosamine 1-carboxyvinyltransferase (433 aa).

22–23 is a phosphoenolpyruvate binding site; sequence KN. Arg-96 serves as a coordination point for UDP-N-acetyl-alpha-D-glucosamine. Residue Cys-120 is the Proton donor of the active site. The residue at position 120 (Cys-120) is a 2-(S-cysteinyl)pyruvic acid O-phosphothioketal. UDP-N-acetyl-alpha-D-glucosamine is bound by residues 125-129, Asp-308, and Ile-330; that span reads RPIDL.

The protein belongs to the EPSP synthase family. MurA subfamily.

Its subcellular location is the cytoplasm. It catalyses the reaction phosphoenolpyruvate + UDP-N-acetyl-alpha-D-glucosamine = UDP-N-acetyl-3-O-(1-carboxyvinyl)-alpha-D-glucosamine + phosphate. It participates in cell wall biogenesis; peptidoglycan biosynthesis. Cell wall formation. Adds enolpyruvyl to UDP-N-acetylglucosamine. In Koribacter versatilis (strain Ellin345), this protein is UDP-N-acetylglucosamine 1-carboxyvinyltransferase.